Here is a 101-residue protein sequence, read N- to C-terminus: Small ribosomal subunit protein uS14 (101 aa).

This sequence belongs to the universal ribosomal protein uS14 family. Part of the 30S ribosomal subunit. Contacts proteins S3 and S10.

Binds 16S rRNA, required for the assembly of 30S particles and may also be responsible for determining the conformation of the 16S rRNA at the A site. The sequence is that of Small ribosomal subunit protein uS14 from Aeromonas hydrophila subsp. hydrophila (strain ATCC 7966 / DSM 30187 / BCRC 13018 / CCUG 14551 / JCM 1027 / KCTC 2358 / NCIMB 9240 / NCTC 8049).